The sequence spans 121 residues: Large ribosomal subunit protein bL20 (121 aa).

The protein belongs to the bacterial ribosomal protein bL20 family.

Binds directly to 23S ribosomal RNA and is necessary for the in vitro assembly process of the 50S ribosomal subunit. It is not involved in the protein synthesizing functions of that subunit. The polypeptide is Large ribosomal subunit protein bL20 (Wolbachia sp. subsp. Brugia malayi (strain TRS)).